Reading from the N-terminus, the 341-residue chain is Heat-shock protein cognate (HSC) co-chaperone sgt12 (341 aa).

Residues 86-123 form a disordered region; it reads PSKEPASAGAQAQSTEAQQPKAGAPTPESDKLKSEGNA. 3 TPR repeats span residues 114 to 147, 148 to 181, and 182 to 215; these read SDKL…APAN, PIYL…DPKY, and SKAW…EGNG. The interval 232–280 is disordered; the sequence is EEANRGAEPPADDVDDAAGASRGAGGMPDLSSLASMLGGRGGGGGGMPD. The segment covering 269 to 278 has biased composition (gly residues); it reads GGRGGGGGGM.

It belongs to the SGT family. In terms of assembly, forms homodimers. Component of the get4/get5/sgt2 sorting complex. Dimers of sgt2 bind directly a single get5. Binds HSC family members ssa1, sse1, hsp104 and hsc82 via its TPR domain.

The protein resides in the cytoplasm. Heat-shock protein cognate (HSC) co-chaperone that preferentially binds endoplasmic reticulum-destined tail-anchored (TA) proteins and directs them to the GET (guided entry of TA proteins) pathway via get4 and get5. Get4 and get5 form an obligate complex that catalyzes the transfer of tail-anchored proteins destined to the endoplasmic reticulum from sgt2 to the cytosolic targeting factor which then targets the TA protein to the ER membrane via get1/get2. The chain is Heat-shock protein cognate (HSC) co-chaperone sgt12 from Aspergillus fumigatus (strain ATCC MYA-4609 / CBS 101355 / FGSC A1100 / Af293) (Neosartorya fumigata).